The primary structure comprises 866 residues: E3 ubiquitin-protein ligase RNF216 (866 aa).

Disordered stretches follow at residues 46–117 (LVTP…NPRS), 131–161 (YTES…SAAL), and 211–240 (EFPG…HPLG). A compositionally biased stretch (acidic residues) spans 55-76 (EEEDLDDDVILTEDDSEDDYGE). Glycyl lysine isopeptide (Lys-Gly) (interchain with G-Cter in SUMO2) cross-links involve residues L80, T89, and K100. A compositionally biased stretch (polar residues) spans 137-156 (LETQNQSSEDSETELLSNLG). Glycyl lysine isopeptide (Lys-Gly) (interchain with G-Cter in SUMO2) cross-links involve residues K351 and K354. At S419 the chain carries Phosphoserine. Glycyl lysine isopeptide (Lys-Gly) (interchain with G-Cter in SUMO2) cross-links involve residues K425, K430, K448, K459, and K485. Residues 475-491 (VQQEQEFYEQKIKEMAE) are a coiled coil. The TRIAD supradomain stretch occupies residues 511 to 728 (QLIECRCCYG…SPGAPCQECS (218 aa)). Positions 515, 518, 537, 540, 605, and 608 each coordinate Zn(2+). The RING-type 1 zinc finger occupies 515-564 (CRCCYGEFPFEELTQCADAHLFCKECLIRYAQEAVFGSGKLELSCMEGSC). The IBR-type zinc finger occupies 583–648 (YKYYERKAEE…LWKEHNGLTC (66 aa)). K619 is covalently cross-linked (Glycyl lysine isopeptide (Lys-Gly) (interchain with G-Cter in SUMO2)). C623, C628, C633, C636, H643, and C648 together coordinate Zn(2+). Residues K658 and K666 each participate in a glycyl lysine isopeptide (Lys-Gly) (interchain with G-Cter in SUMO2) cross-link. Positions 675 and 678 each coordinate Zn(2+). An RING-type 2; atypical zinc finger spans residues 675-703 (CHKCGTGLIKSEGCNRMSCRCGAQMCYLC). Residue C688 is part of the active site. Zn(2+)-binding residues include C693, C695, C700, C703, and H716. The residue at position 719 (S719) is a Phosphoserine; by MAPK1. C724 lines the Zn(2+) pocket. Residues 737–763 (TEDDEKLIEEIQKEAEEEQKRKNGENT) adopt a coiled-coil conformation. Glycyl lysine isopeptide (Lys-Gly) (interchain with G-Cter in SUMO2) cross-links involve residues K765 and K773.

As to quaternary structure, interacts with UBE2L3 and to some extent with UBE2L6. Interacts with TRAF3, TLR3, TLR4, TLR5 and TLR9. Isoform 3/ZIN binds RIPK1. In terms of assembly, (Microbial infection) Isoform 3/ZIN binds RIPK1 and HIV Vif. In terms of processing, auto-ubiquitinated. Phosphorylation at Ser-719 enhances acceptor ubiquitin binding and chain-type specificity towards 'Lys-63' di-ubiquitin but not di-ubiquitin with other linkage types. As to expression, ubiquitous, with the highest levels of expression in testis and peripheral blood leukocytes.

It is found in the cytoplasm. It localises to the cytoplasmic vesicle. Its subcellular location is the clathrin-coated vesicle. It carries out the reaction S-ubiquitinyl-[E2 ubiquitin-conjugating enzyme]-L-cysteine + [acceptor protein]-L-lysine = [E2 ubiquitin-conjugating enzyme]-L-cysteine + N(6)-ubiquitinyl-[acceptor protein]-L-lysine.. The protein operates within protein modification; protein ubiquitination. Allosterically activated by 'Lys-63'-linked di-ubiquitin. In terms of biological role, E3 ubiquitin ligase which accepts ubiquitin from specific E2 ubiquitin-conjugating enzymes, and then transfers it to substrates promoting their ubiquitination. Plays a role in the regulation of antiviral responses by promoting the degradation of TRAF3, TLR4 and TLR9. In turn, down-regulates NF-kappa-B and IRF3 activation as well as beta interferon production. Also participates in the regulation of autophagy by ubiquitinating BECN1 leading to its degradation and autophagy inhibition. Plays a role in ARC-dependent synaptic plasticity by mediating ARC ubiquitination resulting in its rapid proteasomal degradation. Plays aso an essential role in spermatogenesis and male fertility. Mechanistically, regulates meiosis by promoting the degradation of PRKACB through the ubiquitin-mediated lysosome pathway. Modulates the gonadotropin-releasing hormone signal pathway by affecting the stability of STAU2 that is required for the microtubule-dependent transport of neuronal RNA from the cell body to the dendrite. Its function is as follows. Inhibits TNF and IL-1 mediated activation of NF-kappa-B. Promotes TNF and RIP mediated apoptosis. This is E3 ubiquitin-protein ligase RNF216 (RNF216) from Homo sapiens (Human).